The chain runs to 354 residues: Guanine nucleotide-binding protein G(q) subunit alpha (354 aa).

2 S-palmitoyl cysteine lipidation sites follow: C3 and C4. One can recognise a G-alpha domain in the interval 32–354 (RELKLLLLGT…QLNLKEYNLV (323 aa)). A G1 motif region spans residues 35 to 48 (KLLLLGTGESGKST). GTP contacts are provided by residues 40-47 (GTGESGKS), 174-180 (LRVRVPT), 199-203 (DVGGQ), 269-272 (NKKD), and A326. Residues S47 and T180 each contribute to the Mg(2+) site. The interval 172–180 (DILRVRVPT) is G2 motif. The G3 motif stretch occupies residues 195–204 (FRMVDVGGQR). Residues 265 to 272 (ILFLNKKD) are G4 motif. The interval 324–329 (TCATDT) is G5 motif.

This sequence belongs to the G-alpha family. G(q) subfamily. In terms of assembly, g proteins are composed of 3 units; alpha, beta and gamma. The alpha chain contains the guanine nucleotide binding site. In terms of tissue distribution, a high concentration was found in the retinal light-sensitive outer segment.

In terms of biological role, guanine nucleotide-binding proteins (G proteins) are involved as modulators or transducers in various transmembrane signaling systems. Its function is as follows. The G(q) alpha subunit is involved in the light-dependent activation of phospholipase C. This Loligo forbesii (Veined squid) protein is Guanine nucleotide-binding protein G(q) subunit alpha.